A 736-amino-acid chain; its full sequence is Neprilysin-2 (736 aa).

At 1–19 the chain is on the cytoplasmic side; it reads MRPDEEDGTTKSPGSRWTR. The helical; Signal-anchor for type II membrane protein transmembrane segment at 20 to 40 threads the bilayer; sequence IWAIIALILLILFLLVLGAAI. At 41-736 the chain is on the extracellular side; the sequence is YFYINYKDSS…MNPREKCRVW (696 aa). Positions 52-736 constitute a Peptidase M13 domain; it reads VCLSPGCIKT…MNPREKCRVW (685 aa). 5 cysteine pairs are disulfide-bonded: cysteine 53-cysteine 58, cysteine 76-cysteine 721, cysteine 84-cysteine 681, cysteine 142-cysteine 399, and cysteine 608-cysteine 733. The stretch at 103–123 forms a coiled coil; that stretch reads FENLGQDLEFALKELLDENDE. Position 571 (histidine 571) interacts with Zn(2+). Glutamate 572 is a catalytic residue. The Zn(2+) site is built by histidine 575 and glutamate 633. Aspartate 637 serves as the catalytic Proton donor.

The protein belongs to the peptidase M13 family. It depends on Zn(2+) as a cofactor. As to expression, expressed in muscle cells, GLR cells, SMB motor neurons and AIM interneurons.

The protein resides in the membrane. Functionally, required for olfactory plasticity, which is the change from positive chemotaxis to dispersal after prolonged exposure to an odorant. Thought to antagonise snet-1 by degrading excess snet-1 peptides and thus enabling olfactory plasticity. This chain is Neprilysin-2, found in Caenorhabditis elegans.